Here is a 367-residue protein sequence, read N- to C-terminus: Glutamate 5-kinase (367 aa).

Lysine 10 serves as a coordination point for ATP. The substrate site is built by serine 50, aspartate 137, and asparagine 149. Residues 169–170 (TD) and 211–217 (TGGMATK) each bind ATP. Positions 275 to 353 (AGELVVDDGA…QQIGEILGYE (79 aa)) constitute a PUA domain.

Belongs to the glutamate 5-kinase family.

Its subcellular location is the cytoplasm. It carries out the reaction L-glutamate + ATP = L-glutamyl 5-phosphate + ADP. It participates in amino-acid biosynthesis; L-proline biosynthesis; L-glutamate 5-semialdehyde from L-glutamate: step 1/2. Its function is as follows. Catalyzes the transfer of a phosphate group to glutamate to form L-glutamate 5-phosphate. The chain is Glutamate 5-kinase from Erwinia tasmaniensis (strain DSM 17950 / CFBP 7177 / CIP 109463 / NCPPB 4357 / Et1/99).